A 181-amino-acid chain; its full sequence is MELSQTALFIGSIINLNALVLILRAWLQFARVDYYNPVSTFAVKMTDPVLKPLRKIAPTVKNIDTSALLLIFIIGMLKGIIYFGLSVNVLLVLGVLTVLKSIGLAIFYVLFIGAVLSWFNRGNNSISYAFYQLSEPLLKPIRRLLPTLGMIDFSPMVVMFILLFLNNFMLDLLGGLWIIAG.

The next 4 helical transmembrane spans lie at 3-23 (LSQT…VLIL), 67-87 (ALLL…GLSV), 92-112 (VLGV…VLFI), and 159-179 (MFIL…LWII).

It belongs to the YggT family.

Its subcellular location is the cell membrane. This is an uncharacterized protein from Haemophilus influenzae (strain ATCC 51907 / DSM 11121 / KW20 / Rd).